The following is a 266-amino-acid chain: Ribosomal RNA small subunit methyltransferase A (266 aa).

Asn10, Ile12, Gly37, Glu58, Asp82, and Asn105 together coordinate S-adenosyl-L-methionine.

The protein belongs to the class I-like SAM-binding methyltransferase superfamily. rRNA adenine N(6)-methyltransferase family. RsmA subfamily.

It is found in the cytoplasm. It catalyses the reaction adenosine(1518)/adenosine(1519) in 16S rRNA + 4 S-adenosyl-L-methionine = N(6)-dimethyladenosine(1518)/N(6)-dimethyladenosine(1519) in 16S rRNA + 4 S-adenosyl-L-homocysteine + 4 H(+). Its function is as follows. Specifically dimethylates two adjacent adenosines (A1518 and A1519) in the loop of a conserved hairpin near the 3'-end of 16S rRNA in the 30S particle. May play a critical role in biogenesis of 30S subunits. The chain is Ribosomal RNA small subunit methyltransferase A from Mycoplasma mycoides subsp. mycoides SC (strain CCUG 32753 / NCTC 10114 / PG1).